The chain runs to 505 residues: Elsinochrome transporter 1 (505 aa).

Over residues 1–10 the composition is skewed to gly residues; sequence MALSGLGSGP. The interval 1–25 is disordered; it reads MALSGLGSGPEGNPNNHQGKAIPTL. A helical transmembrane segment spans residues 35 to 55; that stretch reads FLFSWVSFLVPFWSWYPFSPL. Residues asparagine 64 and asparagine 80 are each glycosylated (N-linked (GlcNAc...) asparagine). Residues 221–295 form a disordered region; that stretch reads DTPTGAGKPP…TEKGESLPLT (75 aa). Over residues 255 to 267 the composition is skewed to low complexity; that stretch reads TPSSPDRSSSTNS. A run of 6 helical transmembrane segments spans residues 313 to 333, 348 to 368, 391 to 411, 417 to 437, 449 to 469, and 479 to 499; these read VIFS…FGAE, LGLG…LNIV, KALL…IGLA, ATLV…ANGL, VVSG…AIVF, and VFWI…WIKP.

This sequence belongs to the major facilitator superfamily. Nitrate/nitrite porter (TC 2.A.1.8) family.

The protein resides in the cell membrane. Its function is as follows. Major facilitator-type transporter; part of the gene cluster that mediates the biosynthesis of elsinochromes, pigments consisting of at least four interconvertible tautomers (A, B, C and D) that have a core phenolic quinone to which various side chains are attached and which play an important role in fungal pathogenesis. Once elsinochrome is synthesized, it must be exported outside the fungal cells, which is probably accomplished by the ECT1 transporter, to avoid toxicity. The sequence is that of Elsinochrome transporter 1 from Elsinoe fawcettii (Citrus scab fungus).